Here is a 952-residue protein sequence, read N- to C-terminus: Lysosomal alpha-glucosidase (952 aa).

An N-terminal signal peptide occupies residues 1-27 (MGVRHPPCSHRLLAVCALVSLATAALL). Residues 28-69 (GHILLHDFLLVPRELSGSSPVLEETHPAHQQGASRPGPRDAQ) constitute a propeptide that is removed on maturation. The segment at 47–82 (PVLEETHPAHQQGASRPGPRDAQAHPGRPRAVPTQC) is disordered. The P-type domain occupies 80–131 (TQCDVPPNSRFDCAPDKAITQEQCEARGCCYIPAKQGLQGAQMGQPWCFFPP). 3 disulfide bridges follow: Cys-82-Cys-109, Cys-92-Cys-108, and Cys-103-Cys-127. Residues Asn-140, Asn-233, and Asn-390 are each glycosylated (N-linked (GlcNAc...) asparagine). Asp-404 contacts substrate. N-linked (GlcNAc...) asparagine glycosylation occurs at Asn-470. Asp-518 serves as the catalytic Nucleophile. Glu-521 is a catalytic residue. A disulfide bridge connects residues Cys-533 and Cys-558. 2 residues coordinate substrate: Arg-600 and Asp-616. A disulfide bond links Cys-647 and Cys-658. The N-linked (GlcNAc...) asparagine glycan is linked to Asn-652. His-674 lines the substrate pocket. 2 N-linked (GlcNAc...) asparagine glycosylation sites follow: Asn-882 and Asn-925.

It belongs to the glycosyl hydrolase 31 family. The different forms of acid glucosidase are obtained by proteolytic processing. Post-translationally, phosphorylation of mannose residues ensures efficient transport of the enzyme to the lysosomes via the mannose 6-phosphate receptor.

It localises to the lysosome. The protein resides in the lysosome membrane. It carries out the reaction Hydrolysis of terminal, non-reducing (1-&gt;4)-linked alpha-D-glucose residues with release of alpha-D-glucose.. Its function is as follows. Essential for the degradation of glycogen in lysosomes. Has highest activity on alpha-1,4-linked glycosidic linkages, but can also hydrolyze alpha-1,6-linked glucans. This chain is Lysosomal alpha-glucosidase (GAA), found in Homo sapiens (Human).